Consider the following 348-residue polypeptide: Tetraacyldisaccharide 4'-kinase (348 aa).

50-57 contacts ATP; that stretch reads TMGGTGKT.

The protein belongs to the LpxK family.

The enzyme catalyses a lipid A disaccharide + ATP = a lipid IVA + ADP + H(+). It participates in glycolipid biosynthesis; lipid IV(A) biosynthesis; lipid IV(A) from (3R)-3-hydroxytetradecanoyl-[acyl-carrier-protein] and UDP-N-acetyl-alpha-D-glucosamine: step 6/6. Transfers the gamma-phosphate of ATP to the 4'-position of a tetraacyldisaccharide 1-phosphate intermediate (termed DS-1-P) to form tetraacyldisaccharide 1,4'-bis-phosphate (lipid IVA). In Desulfotalea psychrophila (strain LSv54 / DSM 12343), this protein is Tetraacyldisaccharide 4'-kinase.